Reading from the N-terminus, the 630-residue chain is DELLA protein DWARF8 (630 aa).

A disordered region spans residues 1–35 (MKREYQDAGGSGGDMGSSKDKMMAAAAGAGEQEEE). Positions 38–42 (DELLA) match the DELLA motif motif. Positions 161-222 (PIPSPVAAPS…AAPPATQASA (62 aa)) are disordered. Composition is skewed to low complexity over residues 165 to 176 (PVAAPSADPSTD) and 191 to 222 (TSSS…QASA). Residues 234-623 (VDTQEAGIRL…RPLIATSAWR (390 aa)) enclose the GRAS domain. A leucine repeat I (LRI) region spans residues 241–297 (IRLVHALLACAEAVQQENFSAAEALVKQIPMLASSQGGAMRKVAAYFGEALARRVYR). A LxCxE motif motif is present at residues 248–252 (LACAE). Positions 316–381 (HAHFYESCPY…GGPPSFRLTG (66 aa)) are VHIID. Residues 347-351 (VHVVD) carry the VHIID motif. Residues 395-427 (QVGWKLAQFAHTIRVDFQYRGLVAATLADLEPF) are leucine repeat II (LRII). The tract at residues 443–544 (IAVNSVFELH…EVYLGRQICN (102 aa)) is PFYRE. Residues 451–455 (LHRLL) carry the LXXLL motif motif. Residues 547 to 623 (ACEGAERTER…RPLIATSAWR (77 aa)) are SAW.

Belongs to the GRAS family. DELLA subfamily. Phosphorylated. In terms of processing, ubiquitinated. Upon GA application it is ubiquitinated, leading to its subsequent degradation.

Its subcellular location is the nucleus. In terms of biological role, probable transcriptional regulator that acts as a repressor of the gibberellin (GA) signaling pathway. Probably acts by participating in large multiprotein complexes that repress transcription of GA-inducible genes. Upon GA application, it is degraded by the proteasome, allowing the GA signaling pathway. The polypeptide is DELLA protein DWARF8 (D8) (Zea mays (Maize)).